Here is a 286-residue protein sequence, read N- to C-terminus: Putative electron transfer flavoprotein subunit YgcQ (286 aa).

225-253 (VCIVVGASGAAALMAGVRNSKFVVAINHD) contributes to the FAD binding site.

The protein belongs to the ETF alpha-subunit/FixB family. In terms of assembly, ygcQ and YgcR form a heterodimer.

Its function is as follows. May play a role in a redox process. The polypeptide is Putative electron transfer flavoprotein subunit YgcQ (ygcQ) (Escherichia coli (strain K12)).